Consider the following 354-residue polypeptide: Homer protein homolog 2 (354 aa).

In terms of domain architecture, WH1 spans 1–110 (MGEQPIFTTR…EKFQEVREAA (110 aa)). A coiled-coil region spans residues 92-120 (SEQQLTKFAEKFQEVREAARLARDKSQEK). The interval 114–163 (RDKSQEKIETSSNHSQESGCETPSSTQASSVNGTDDEKASHASPADTHLK) is disordered. Polar residues predominate over residues 123-146 (TSSNHSQESGCETPSSTQASSVNG). Positions 160 to 329 (THLKSENDKL…RHLKGELKSF (170 aa)) form a coiled coil.

This sequence belongs to the Homer family. In terms of assembly, isoform 1 and isoform 2 encode coiled-coil structures that mediate homo- and heteromultimerization. Interacts with NFATC2; interaction is reduced by AKT activation. Interacts with NFATC1 and NFATC4. Interacts with DAGLA (via PPXXF motif); this interaction is required for the cell membrane localization of DAGLA. As to expression, constitutively expressed in the adult hippocampus.

It is found in the cytoplasm. The protein localises to the cell membrane. It localises to the postsynaptic density. The protein resides in the synapse. Its subcellular location is the cell projection. It is found in the stereocilium. In terms of biological role, postsynaptic density scaffolding protein. Binds and cross-links cytoplasmic regions of GRM1, GRM5, ITPR1, DNM3, RYR1, RYR2, SHANK1 and SHANK3. By physically linking GRM1 and GRM5 with ER-associated ITPR1 receptors, it aids the coupling of surface receptors to intracellular calcium release. May also couple GRM1 to PI3 kinase through its interaction with AGAP2. Isoforms can be differently regulated and may play an important role in maintaining the plasticity at glutamatergic synapses. Required for normal hearing. Negatively regulates T cell activation by inhibiting the calcineurin-NFAT pathway. Acts by competing with calcineurin/PPP3CA for NFAT protein binding, hence preventing NFAT activation by PPP3CA. The chain is Homer protein homolog 2 from Rattus norvegicus (Rat).